The chain runs to 334 residues: Gap junction alpha-2 protein (334 aa).

Topologically, residues 1–12 (MAGWELLKLLLD) are cytoplasmic. The helical transmembrane segment at 13–35 (DVQEHSTLIGKVWLTVLFIFRIF) threads the bilayer. Topologically, residues 36–75 (ILSVAGESVWTDEQSDFICNTQQPGCTNVCYDQAFPISHV) are extracellular. The helical transmembrane segment at 76–98 (RYWVLQFLFVSTPTLIYLGHMVY) threads the bilayer. Residues 99–153 (LSKKEEKERQKENESRILVANEAQTEVHSSATKKIRIQGPLMCTYTTSVVFKSIF) are Cytoplasmic-facing. The chain crosses the membrane as a helical span at residues 154 to 176 (EAGFLLGQWYIYGFVMSPIFVCE). Residues 177 to 207 (RIPCKHKVECFVSRPMEKTIFIIFMLVVSLI) lie on the Extracellular side of the membrane. The chain crosses the membrane as a helical span at residues 208–230 (SLLLNLMELIHLSFKCFQHGIKE). The Cytoplasmic portion of the chain corresponds to 231–334 (GATCSPTGIP…HQTSSKQQYV (104 aa)).

This sequence belongs to the connexin family. Alpha-type (group II) subfamily. In terms of assembly, a connexon is composed of a hexamer of connexins. As to expression, resides primarily in the ovary, oocytes and early embryos.

The protein resides in the cell membrane. Its subcellular location is the cell junction. The protein localises to the gap junction. Functionally, one gap junction consists of a cluster of closely packed pairs of transmembrane channels, the connexons, through which materials of low MW diffuse from one cell to a neighboring cell. In Xenopus laevis (African clawed frog), this protein is Gap junction alpha-2 protein (gja2).